The sequence spans 265 residues: Transcription factor LBX1 (265 aa).

Over residues 1–20 (MTSKDEAKSSSVEERRRHAL) the composition is skewed to basic and acidic residues. Positions 1 to 33 (MTSKDEAKSSSVEERRRHALDLLPPPANSNKPL) are disordered. The segment at residues 125–184 (RRKSRTAFTNHQIYELEKRFLYQKYLSPADRDQIAQQLGLTNAQVITWFQNRRAKLKRDL) is a DNA-binding region (homeobox). The interval 212–265 (EEETNSVRDDSRSRSPQLGLSGHMPLSPSSPLTEQHTSKECSEDEEDVEIDVDD) is disordered. Positions 253–265 (SEDEEDVEIDVDD) are enriched in acidic residues.

The protein resides in the nucleus. In terms of biological role, transcription factor that controls hypaxial muscle development by down-regulating myod1 and cdkn1b/p27, thereby allowing myoblasts to proliferate before the onset of terminal differentiation. This chain is Transcription factor LBX1, found in Xenopus tropicalis (Western clawed frog).